Here is a 295-residue protein sequence, read N- to C-terminus: Pantothenate synthetase (295 aa).

ATP is bound at residue 30-37 (MGNLHDGH). Catalysis depends on histidine 37, which acts as the Proton donor. Glutamine 61 contacts (R)-pantoate. Glutamine 61 serves as a coordination point for beta-alanine. 149–152 (GEKD) is a binding site for ATP. Glutamine 155 is a binding site for (R)-pantoate. ATP-binding positions include valine 178 and 186–189 (MSSR).

Belongs to the pantothenate synthetase family. Homodimer.

It localises to the cytoplasm. The catalysed reaction is (R)-pantoate + beta-alanine + ATP = (R)-pantothenate + AMP + diphosphate + H(+). It functions in the pathway cofactor biosynthesis; (R)-pantothenate biosynthesis; (R)-pantothenate from (R)-pantoate and beta-alanine: step 1/1. Catalyzes the condensation of pantoate with beta-alanine in an ATP-dependent reaction via a pantoyl-adenylate intermediate. The sequence is that of Pantothenate synthetase from Photobacterium profundum (strain SS9).